The following is a 65-amino-acid chain: Large ribosomal subunit protein uL30 (65 aa).

It belongs to the universal ribosomal protein uL30 family. As to quaternary structure, part of the 50S ribosomal subunit.

The polypeptide is Large ribosomal subunit protein uL30 (Onion yellows phytoplasma (strain OY-M)).